A 321-amino-acid chain; its full sequence is Glyoxylate/hydroxypyruvate reductase B (321 aa).

Active-site residues include Arg-237 and Glu-266. His-285 (proton donor) is an active-site residue.

Belongs to the D-isomer specific 2-hydroxyacid dehydrogenase family. GhrB subfamily. Homodimer.

Its subcellular location is the cytoplasm. The catalysed reaction is glycolate + NADP(+) = glyoxylate + NADPH + H(+). It carries out the reaction (R)-glycerate + NAD(+) = 3-hydroxypyruvate + NADH + H(+). The enzyme catalyses (R)-glycerate + NADP(+) = 3-hydroxypyruvate + NADPH + H(+). Its function is as follows. Catalyzes the NADPH-dependent reduction of glyoxylate and hydroxypyruvate into glycolate and glycerate, respectively. The sequence is that of Glyoxylate/hydroxypyruvate reductase B from Erwinia tasmaniensis (strain DSM 17950 / CFBP 7177 / CIP 109463 / NCPPB 4357 / Et1/99).